The following is a 1188-amino-acid chain: DNA polymerase (1188 aa).

The tract at residues 1–74 is disordered; that stretch reads MALVPSPRAG…PAANNVSLTP (74 aa). Residues 31–41 show a composition bias toward low complexity; sequence STAGAAPTATR.

This sequence belongs to the DNA polymerase type-B family. As to quaternary structure, heterodimer with the terminal protein; this heterodimer binds to bp 9 to 18 of the genome. Forms a complex with viral pTP, DBP and hosts NFIA and POU2F1/OCT1 for initiation of replication.

It localises to the host nucleus. It carries out the reaction DNA(n) + a 2'-deoxyribonucleoside 5'-triphosphate = DNA(n+1) + diphosphate. In terms of biological role, eukaryotic-type DNA polymerase involved in viral genomic replication. DNA synthesis is protein primed, and acts in a strand displacement replication. Assembles in complex with viral pTP, DBP, host NFIA and host POU2F1/OCT1 on viral origin of replication. The polymerase covalently transfers dCMP onto pTP, thereby initiating complementary strand synthesis. The polypeptide is DNA polymerase (Human adenovirus F serotype 40 (HAdV-40)).